The sequence spans 98 residues: N(2)-fixation sustaining protein CowN (98 aa).

It belongs to the CowN family.

Its function is as follows. Is required to sustain N(2)-dependent growth in the presence of low levels of carbon monoxide (CO). Probably acts by protecting the N(2) fixation ability of the nitrogenase complex, which is inactivated in the presence of CO. This is N(2)-fixation sustaining protein CowN from Trichlorobacter lovleyi (strain ATCC BAA-1151 / DSM 17278 / SZ) (Geobacter lovleyi).